Reading from the N-terminus, the 186-residue chain is Adenylate kinase (186 aa).

12–17 contacts ATP; the sequence is GAGKGT. The NMP stretch occupies residues 32 to 61; it reads STGDLLRAEVNAQSPLGKEAALIMNKGELV. AMP is bound by residues threonine 33, arginine 38, 59–61, 86–89, and glutamine 93; these read ELV and GFPR. The segment at 127-133 is LID; that stretch reads SRGRSDD. Arginine 128 serves as a coordination point for ATP. AMP contacts are provided by arginine 130 and arginine 141. Glycine 169 serves as a coordination point for ATP.

The protein belongs to the adenylate kinase family. In terms of assembly, monomer.

It localises to the cytoplasm. The catalysed reaction is AMP + ATP = 2 ADP. It functions in the pathway purine metabolism; AMP biosynthesis via salvage pathway; AMP from ADP: step 1/1. In terms of biological role, catalyzes the reversible transfer of the terminal phosphate group between ATP and AMP. Plays an important role in cellular energy homeostasis and in adenine nucleotide metabolism. The chain is Adenylate kinase from Prochlorococcus marinus (strain MIT 9211).